A 148-amino-acid polypeptide reads, in one-letter code: Large ribosomal subunit protein bL9 (148 aa).

This sequence belongs to the bacterial ribosomal protein bL9 family.

Functionally, binds to the 23S rRNA. The chain is Large ribosomal subunit protein bL9 from Campylobacter concisus (strain 13826).